A 201-amino-acid polypeptide reads, in one-letter code: LexA repressor 1 (201 aa).

A DNA-binding region (H-T-H motif) is located at residues Leu27–Gln47. Active-site for autocatalytic cleavage activity residues include Ser122 and Lys159.

The protein belongs to the peptidase S24 family. As to quaternary structure, homodimer.

It carries out the reaction Hydrolysis of Ala-|-Gly bond in repressor LexA.. Functionally, represses a number of genes involved in the response to DNA damage (SOS response), including recA and lexA. In the presence of single-stranded DNA, RecA interacts with LexA causing an autocatalytic cleavage which disrupts the DNA-binding part of LexA, leading to derepression of the SOS regulon and eventually DNA repair. The polypeptide is LexA repressor 1 (Xanthomonas campestris pv. campestris (strain ATCC 33913 / DSM 3586 / NCPPB 528 / LMG 568 / P 25)).